Consider the following 477-residue polypeptide: Bifunctional protein HldE (477 aa).

A ribokinase region spans residues 1–318 (MKVTLPEFER…ENAVRGRADT (318 aa)). K179 carries the N6-acetyllysine modification. Residue 195–198 (NLSE) participates in ATP binding. D264 is a catalytic residue. Residues 344-477 (MTNGVFDILH…IKKIQQDKKG (134 aa)) form a cytidylyltransferase region.

This sequence in the N-terminal section; belongs to the carbohydrate kinase PfkB family. The protein in the C-terminal section; belongs to the cytidylyltransferase family. Homodimer.

It carries out the reaction D-glycero-beta-D-manno-heptose 7-phosphate + ATP = D-glycero-beta-D-manno-heptose 1,7-bisphosphate + ADP + H(+). The enzyme catalyses D-glycero-beta-D-manno-heptose 1-phosphate + ATP + H(+) = ADP-D-glycero-beta-D-manno-heptose + diphosphate. It participates in nucleotide-sugar biosynthesis; ADP-L-glycero-beta-D-manno-heptose biosynthesis; ADP-L-glycero-beta-D-manno-heptose from D-glycero-beta-D-manno-heptose 7-phosphate: step 1/4. It functions in the pathway nucleotide-sugar biosynthesis; ADP-L-glycero-beta-D-manno-heptose biosynthesis; ADP-L-glycero-beta-D-manno-heptose from D-glycero-beta-D-manno-heptose 7-phosphate: step 3/4. The protein operates within bacterial outer membrane biogenesis; LPS core biosynthesis. Its function is as follows. Catalyzes the phosphorylation of D-glycero-D-manno-heptose 7-phosphate at the C-1 position to selectively form D-glycero-beta-D-manno-heptose-1,7-bisphosphate. Catalyzes the ADP transfer from ATP to D-glycero-beta-D-manno-heptose 1-phosphate, yielding ADP-D-glycero-beta-D-manno-heptose. This Escherichia coli O157:H7 protein is Bifunctional protein HldE.